Reading from the N-terminus, the 487-residue chain is NADH-quinone oxidoreductase subunit N (487 aa).

Transmembrane regions (helical) follow at residues 12–32 (VLILPEILIALGIMALLLIGV), 40–60 (LTVTGLTIALLFATIILIVLF), 79–99 (YMKILTLIGALFSLILSVGFS), 104–124 (FDIFEFPILVLLATLGMMLMI), 129–149 (MLSLYMGLELQSLALYVLAAI), 164–184 (FVLGALSSGLLLYGISLLYGF), 201–221 (ILHLGVIFGIVFILAGLAFKI), 248–268 (APKIAAMALIIRVIVFAFIPL), 281–301 (ILIFMAISSMALGAFAAIGQT), 310–330 (SSIGHMGYALVGLAAGNILGV), 332–352 (GILIYMTIYLGMTIGSFAFIL), 378–398 (AIVMTIQLFSLASIPPMAGFF), 411–431 (GLVPLAIVGMVLSVIGAFYYL), and 455–475 (LCLCLSALFVLFYVFFGFWFS).

The protein belongs to the complex I subunit 2 family. NDH-1 is composed of 14 different subunits. Subunits NuoA, H, J, K, L, M, N constitute the membrane sector of the complex.

It is found in the cell inner membrane. The enzyme catalyses a quinone + NADH + 5 H(+)(in) = a quinol + NAD(+) + 4 H(+)(out). NDH-1 shuttles electrons from NADH, via FMN and iron-sulfur (Fe-S) centers, to quinones in the respiratory chain. The immediate electron acceptor for the enzyme in this species is believed to be ubiquinone. Couples the redox reaction to proton translocation (for every two electrons transferred, four hydrogen ions are translocated across the cytoplasmic membrane), and thus conserves the redox energy in a proton gradient. In Bartonella bacilliformis (strain ATCC 35685 / KC583 / Herrer 020/F12,63), this protein is NADH-quinone oxidoreductase subunit N.